Consider the following 339-residue polypeptide: Putative zinc metalloprotease CA_C1796 (339 aa).

Residue His-20 coordinates Zn(2+). The active site involves Glu-21. His-24 contributes to the Zn(2+) binding site. A run of 3 helical transmembrane segments spans residues Leu-91–Gly-113, Gln-275–Phe-297, and Val-310–Ile-330. The region spanning Ile-99–Gly-177 is the PDZ domain.

It belongs to the peptidase M50B family. Zn(2+) serves as cofactor.

The protein resides in the cell membrane. The sequence is that of Putative zinc metalloprotease CA_C1796 from Clostridium acetobutylicum (strain ATCC 824 / DSM 792 / JCM 1419 / IAM 19013 / LMG 5710 / NBRC 13948 / NRRL B-527 / VKM B-1787 / 2291 / W).